Consider the following 261-residue polypeptide: tRNA pseudouridine synthase A (261 aa).

The active-site Nucleophile is the aspartate 51. Tyrosine 109 is a substrate binding site.

The protein belongs to the tRNA pseudouridine synthase TruA family. Homodimer.

The enzyme catalyses uridine(38/39/40) in tRNA = pseudouridine(38/39/40) in tRNA. Functionally, formation of pseudouridine at positions 38, 39 and 40 in the anticodon stem and loop of transfer RNAs. This Tolumonas auensis (strain DSM 9187 / NBRC 110442 / TA 4) protein is tRNA pseudouridine synthase A.